Here is a 124-residue protein sequence, read N- to C-terminus: Fluoride-specific ion channel FluC (124 aa).

The next 4 membrane-spanning stretches (helical) occupy residues 4 to 24, 35 to 55, 60 to 80, and 102 to 122; these read LLLVALGGSIGAVFRYLISIF, FGTLLVNVLGSFLMGVIYALG, ISPELKALIGVGLLGALTTFS, and VVLNLSLCLFMVYLGQQLVFS. Na(+) is bound by residues Gly74 and Thr77.

The protein belongs to the fluoride channel Fluc/FEX (TC 1.A.43) family.

Its subcellular location is the cell inner membrane. It carries out the reaction fluoride(in) = fluoride(out). With respect to regulation, na(+) is not transported, but it plays an essential structural role and its presence is essential for fluoride channel function. In terms of biological role, fluoride-specific ion channel. Important for reducing fluoride concentration in the cell, thus reducing its toxicity. This Shewanella sp. (strain ANA-3) protein is Fluoride-specific ion channel FluC.